A 65-amino-acid polypeptide reads, in one-letter code: Large ribosomal subunit protein uL30 (65 aa).

This sequence belongs to the universal ribosomal protein uL30 family. Part of the 50S ribosomal subunit.

This Onion yellows phytoplasma (strain OY-M) protein is Large ribosomal subunit protein uL30.